Here is a 422-residue protein sequence, read N- to C-terminus: UDP-N-acetylglucosamine 1-carboxyvinyltransferase (422 aa).

Residue 22–23 coordinates phosphoenolpyruvate; sequence KN. Residue Arg-93 coordinates UDP-N-acetyl-alpha-D-glucosamine. Cys-117 functions as the Proton donor in the catalytic mechanism. 2-(S-cysteinyl)pyruvic acid O-phosphothioketal is present on Cys-117. UDP-N-acetyl-alpha-D-glucosamine-binding positions include 122 to 126, Asp-308, and Leu-330; that span reads RPVDL.

It belongs to the EPSP synthase family. MurA subfamily.

Its subcellular location is the cytoplasm. It carries out the reaction phosphoenolpyruvate + UDP-N-acetyl-alpha-D-glucosamine = UDP-N-acetyl-3-O-(1-carboxyvinyl)-alpha-D-glucosamine + phosphate. Its pathway is cell wall biogenesis; peptidoglycan biosynthesis. Cell wall formation. Adds enolpyruvyl to UDP-N-acetylglucosamine. In Helicobacter pylori (strain Shi470), this protein is UDP-N-acetylglucosamine 1-carboxyvinyltransferase.